The sequence spans 374 residues: MKTKKMILVDKVFYEKILSVESFKENIITQSAIPKISNKEVRLISSGSKIFYAINNTSPHSHVQLRLNRFFLSHIPLNSAAKAFVRGGSYLKYLEPHIYGSSYCRLDISSFFNNISFDDVKQSLSPYIKDEYLIGTEQKLIDAILNSVGYESPIRKDKGMIIPMGFRTSPAISNIVFRKMDLLIQDFCAKKGVIYSRYADDMLFSNPRESKLLMSDYFIDEISSLLSIMGFNINQSKYISREKEISINGYVIENKGGNGSIGTIRLSKSKLNTVLKVTHALAQNIPYKNICNKYIKVRLKEKNIKYESKKDEFEKKYYRDQLINYLGGYRSYLISLVKFHSEYKCVNSDFIIQINGILNDIQNHIQKIKKNRRL.

The Reverse transcriptase domain maps to 25–252; the sequence is ENIITQSAIP…KEISINGYVI (228 aa). Residues D107, D200, and D201 each contribute to the Mg(2+) site.

Belongs to the bacterial reverse transcriptase family.

The catalysed reaction is DNA(n) + a 2'-deoxyribonucleoside 5'-triphosphate = DNA(n+1) + diphosphate. In terms of biological role, reverse transcriptase (RT) component of antiviral defense system retron Eco8, composed of this RT, the following endonuclease and a non-coding RNA (ncRNA) encoded between them. Expression of retron Eco8 confers protection against bacteriophages T4, T6, T7 and SECphi4, SECphi6 and SECphi18. At multiplicity of infection (MOI) of 0.02 cultures slow growth when infected with SECphi4 but do not collapse, at MOI 2 cultures collapse. Responsible for synthesis of msDNA (a branched molecule with RNA linked by a 2',5'-phosphodiester bond to ssDNA). The retron transcript serves as primer (from a conserved internal G residue) and template for the reaction, and codes for the RT. The polypeptide is Retron Eco8 reverse transcriptase (Escherichia coli).